We begin with the raw amino-acid sequence, 309 residues long: MPKVRTKDIIEQFQLELVSGAEGIYRPITTSDLSRPGIEMAGYFAYYPAERLQLLGRTELSFYETLTPEEKRARMQRLCTDITPGIIVSRGLDVPPELIEASERQSVPVMRSTMKTTRLSSRLTNYLESKLAPTTAVHGVLVDVYGVGVLITGKSGVGKSETALELVKRGHRLVADDCVEIRQEDEDTLIGSAPELIEHLLEIRGLGIINMMTLFGAGAVLPHKRISLVIDLELWDPEKQYDRLGLEEEKMKILDIELPRLTIPVRPGRNLAVIVEVAAMNFRLKRMGVNAAEEFSARLSDAIEEGERD.

Catalysis depends on residues histidine 138 and lysine 159. Glycine 153–serine 160 lines the ATP pocket. Serine 160 provides a ligand contact to Mg(2+). The active-site Proton acceptor; for phosphorylation activity. Proton donor; for dephosphorylation activity is aspartate 177. The interval leucine 201 to asparagine 210 is important for the catalytic mechanism of both phosphorylation and dephosphorylation. Mg(2+) is bound at residue glutamate 202. Arginine 243 is an active-site residue. Residues proline 264 to arginine 269 are important for the catalytic mechanism of dephosphorylation.

The protein belongs to the HPrK/P family. As to quaternary structure, homohexamer. Mg(2+) serves as cofactor.

The enzyme catalyses [HPr protein]-L-serine + ATP = [HPr protein]-O-phospho-L-serine + ADP + H(+). It catalyses the reaction [HPr protein]-O-phospho-L-serine + phosphate + H(+) = [HPr protein]-L-serine + diphosphate. In terms of biological role, catalyzes the ATP- as well as the pyrophosphate-dependent phosphorylation of a specific serine residue in HPr, a phosphocarrier protein of the phosphoenolpyruvate-dependent sugar phosphotransferase system (PTS). HprK/P also catalyzes the pyrophosphate-producing, inorganic phosphate-dependent dephosphorylation (phosphorolysis) of seryl-phosphorylated HPr (P-Ser-HPr). The two antagonistic activities of HprK/P are regulated by several intracellular metabolites, which change their concentration in response to the absence or presence of rapidly metabolisable carbon sources (glucose, fructose, etc.) in the growth medium. Also phosphorylates/dephosphorylates the HPr-like catabolite repression protein crh on a specific serine residue. Therefore, by controlling the phosphorylation state of HPr and crh, HPrK/P is a sensor enzyme that plays a major role in the regulation of carbon metabolism and sugar transport: it mediates carbon catabolite repression (CCR), and regulates PTS-catalyzed carbohydrate uptake and inducer exclusion. The protein is HPr kinase/phosphorylase of Geobacillus thermodenitrificans (strain NG80-2).